A 74-amino-acid chain; its full sequence is Putative membrane protein insertion efficiency factor (74 aa).

It belongs to the UPF0161 family.

The protein localises to the cell membrane. Functionally, could be involved in insertion of integral membrane proteins into the membrane. The chain is Putative membrane protein insertion efficiency factor from Anoxybacillus flavithermus (strain DSM 21510 / WK1).